The sequence spans 405 residues: Nodal homolog 2-A (405 aa).

The signal sequence occupies residues 1–18 (MASLGVILFFVIASLIHG). Positions 19-282 (KPIHSERKAA…RVTDTRRPRR (264 aa)) are excised as a propeptide. 3 N-linked (GlcNAc...) asparagine glycosylation sites follow: Asn-71, Asn-172, and Asn-343. 3 cysteine pairs are disulfide-bonded: Cys-305/Cys-371, Cys-334/Cys-402, and Cys-338/Cys-404.

This sequence belongs to the TGF-beta family. As to quaternary structure, homodimer; disulfide-linked. Forms heterodimers with the TGF-beta family member derriere. Interacts with tsku; enhances nodal2 activity. In terms of tissue distribution, first localized to the vegetal region of the blastula. Just prior to gastrulation (stage 10), this expression disappears and instead becomes localized to the dorsal marginal zone, with enrichment in the organizer.

Its subcellular location is the secreted. In terms of biological role, cooperation and regulatory loops of multiple nodals are essential for mesendoderm patterning in early embryos. Essential for mesoderm formation and axial patterning during embryonic development. Activates the activin-like signaling pathway to induce dorsal and ventral mesoderm in animal cap ectoderm. In addition, also dorsalizes ventral marginal zone (VMZ) tissues during gastrulation. Induces muscle actin. Appears to act as both a short-range and long-range morphogen. The unprocessed protein inhibits bmp- and wnt-signaling. In Xenopus laevis (African clawed frog), this protein is Nodal homolog 2-A (nodal2-a).